Reading from the N-terminus, the 235-residue chain is Lipoprotein-releasing system ATP-binding protein LolD (235 aa).

Positions 5–235 constitute an ABC transporter domain; that stretch reads LECRDIRKVY…LMTESASVEG (231 aa). ATP is bound at residue 41-48; that stretch reads GSSGSGKS.

It belongs to the ABC transporter superfamily. Lipoprotein translocase (TC 3.A.1.125) family. As to quaternary structure, the complex is composed of two ATP-binding proteins (LolD) and two transmembrane proteins (LolC and LolE).

The protein resides in the cell inner membrane. Part of the ABC transporter complex LolCDE involved in the translocation of mature outer membrane-directed lipoproteins, from the inner membrane to the periplasmic chaperone, LolA. Responsible for the formation of the LolA-lipoprotein complex in an ATP-dependent manner. This Vibrio parahaemolyticus serotype O3:K6 (strain RIMD 2210633) protein is Lipoprotein-releasing system ATP-binding protein LolD.